The following is a 274-amino-acid chain: 2,3,4,5-tetrahydropyridine-2,6-dicarboxylate N-succinyltransferase (274 aa).

2 residues coordinate substrate: Arg-104 and Asp-141.

The protein belongs to the transferase hexapeptide repeat family. As to quaternary structure, homotrimer.

It is found in the cytoplasm. It catalyses the reaction (S)-2,3,4,5-tetrahydrodipicolinate + succinyl-CoA + H2O = (S)-2-succinylamino-6-oxoheptanedioate + CoA. It functions in the pathway amino-acid biosynthesis; L-lysine biosynthesis via DAP pathway; LL-2,6-diaminopimelate from (S)-tetrahydrodipicolinate (succinylase route): step 1/3. This is 2,3,4,5-tetrahydropyridine-2,6-dicarboxylate N-succinyltransferase from Citrobacter koseri (strain ATCC BAA-895 / CDC 4225-83 / SGSC4696).